The chain runs to 101 residues: MAKVSAVEKNKRREIMVKRYAARRARLKAIVMDQKISLEERFKASVQLAELPRNSAKVRVRNRCEVSGRPRAYYRKLKMSRIALRELGSVGHIPGIIKSSW.

This sequence belongs to the universal ribosomal protein uS14 family. As to quaternary structure, part of the 30S ribosomal subunit. Contacts proteins S3 and S10.

Its function is as follows. Binds 16S rRNA, required for the assembly of 30S particles and may also be responsible for determining the conformation of the 16S rRNA at the A site. The sequence is that of Small ribosomal subunit protein uS14 from Bartonella henselae (strain ATCC 49882 / DSM 28221 / CCUG 30454 / Houston 1) (Rochalimaea henselae).